A 422-amino-acid polypeptide reads, in one-letter code: Cystine lyase CORI3 (422 aa).

The protein belongs to the class-I pyridoxal-phosphate-dependent aminotransferase family. In terms of assembly, homodimer. Requires pyridoxal 5'-phosphate as cofactor. In terms of tissue distribution, expressed in cotyledons, sepals, pistils, flower buds, phloem companion cells and vascular tissues of petiole, leaf, filament and fruit.

The enzyme catalyses L-cystine + H2O = S-sulfanyl-L-cysteine + pyruvate + NH4(+). In terms of biological role, possesses cystine lyase activity in vitro. Does not possess tyrosine aminotransferase, alanine aminotransferase, aspartate aminotransferase and tryptophan aminotransferase activities. The chain is Cystine lyase CORI3 from Arabidopsis thaliana (Mouse-ear cress).